The primary structure comprises 701 residues: MFEFLVTTSKGLDELLAQEITKLCPQLSVKTKPGQVLFTGEIEQAYKICLWSRLANRVMLKLADGHVDSADDVYQITSSVNWTSHFSVNSTFVVDFVGASHCINNSQFGALKIKDAVVDQFNELFESRPSVSKIEPDIRIQGRMWSDKLTVYLDLSGSSLHQRHYRTKTGLAPVKEHIACAMLVRSGWANDQQAPLVDPMCGAGTIAIEAALMAANIAPALKRERWGFTRWLQHDATLWQSLLDDANAQIITPNCVISASDIDHGVVSIAKENADAAGVFSGIKFNTIDACKVIPPKGHTKGYIVSNPPYGERLSEITALLPLFQAWGTSLKEHFKGWNLSLLTSNRDLLRSMKMFAHKEYKLMNGKLECQLVNFALDEKNCITRETSLSNNDFANRLNKNIKRLSKWLKSENTNCYRIYDADLPEYNVAIDRYGDWLVVQEYAAPKNVPEAKAKRRLHEVIVALPQVVDVPAEQIVMKVRAQQKGKSQYEKVSQKQKMLEVFENGAKFKLNLTDYLDTGLFLDHRVTRQLVQQRVKDKDVLNLFAYTGSVSVHAALGKAKSVTTVDMSNTYVDWAKENFALNKLKGPYEFIQADCLTWLERHNNQYDFIFIDPPSFSNSKRMDTTWDVQRDHVALLRNAVKCLRPGGEIMFSNNLRQFKLDEEGVSQLGLTIQDITQKTLPEDFKRNPKIHGCWVLTLNA.

The THUMP domain maps to 44-155 (QAYKICLWSR…SDKLTVYLDL (112 aa)).

This sequence belongs to the methyltransferase superfamily. RlmKL family.

The protein localises to the cytoplasm. The catalysed reaction is guanosine(2445) in 23S rRNA + S-adenosyl-L-methionine = N(2)-methylguanosine(2445) in 23S rRNA + S-adenosyl-L-homocysteine + H(+). It catalyses the reaction guanosine(2069) in 23S rRNA + S-adenosyl-L-methionine = N(2)-methylguanosine(2069) in 23S rRNA + S-adenosyl-L-homocysteine + H(+). Specifically methylates the guanine in position 2445 (m2G2445) and the guanine in position 2069 (m7G2069) of 23S rRNA. The protein is Ribosomal RNA large subunit methyltransferase K/L of Pseudoalteromonas atlantica (strain T6c / ATCC BAA-1087).